The primary structure comprises 199 residues: Ribonuclease P protein subunit p25 (199 aa).

Positions methionine 1–glutamate 11 are enriched in basic and acidic residues. 2 disordered regions span residues methionine 1 to phenylalanine 28 and leucine 144 to alanine 199. Positions tyrosine 151 to alanine 166 are enriched in pro residues. 2 positions are modified to phosphoserine: serine 172 and serine 182.

This sequence belongs to the histone-like Alba family. As to quaternary structure, component of nuclear RNase P and RNase MRP ribonucleoproteins. RNase P consists of a catalytic RNA moiety and 10 different protein chains; POP1, POP4, POP5, POP7, RPP14, RPP21, RPP25, RPP30, RPP38 and RPP40. Within the RNase P complex, POP1, POP7 and RPP25 form the 'finger' subcomplex, POP5, RPP14, RPP40 and homodimeric RPP30 form the 'palm' subcomplex, and RPP21, POP4 and RPP38 form the 'wrist' subcomplex. All subunits of the RNase P complex interact with the catalytic RNA. Several subunits of RNase P are also part of the RNase MRP complex. RNase MRP consists of a catalytic RNA moiety and about 8 protein subunits; POP1, POP7, RPP25, RPP30, RPP38, RPP40 and possibly also POP4 and POP5. POP7 forms a heterodimer with RPP25 that binds to the P3 stem loop of the catalytic RNA.

The protein resides in the nucleus. The protein localises to the nucleolus. Functionally, component of ribonuclease P, a ribonucleoprotein complex that generates mature tRNA molecules by cleaving their 5'-ends. Also a component of the MRP ribonuclease complex, which cleaves pre-rRNA sequences. In Homo sapiens (Human), this protein is Ribonuclease P protein subunit p25 (RPP25).